Consider the following 94-residue polypeptide: Acylphosphatase (94 aa).

One can recognise an Acylphosphatase-like domain in the interval 8 to 94; sequence TLFIIVHGKV…GRRFKHFAQH (87 aa). Active-site residues include arginine 23 and asparagine 41. The interval 69 to 94 is disordered; it reads PPAASVTELESRREDGGRRFKHFAQH. Residues 77-86 are compositionally biased toward basic and acidic residues; the sequence is LESRREDGGR.

It belongs to the acylphosphatase family.

The catalysed reaction is an acyl phosphate + H2O = a carboxylate + phosphate + H(+). This is Acylphosphatase (acyP) from Bordetella avium (strain 197N).